A 55-amino-acid chain; its full sequence is Ribosome modulation factor (55 aa).

The protein belongs to the ribosome modulation factor family. As to quaternary structure, associates exclusively with 100S ribosomes.

Its subcellular location is the cytoplasm. Its function is as follows. During stationary phase, converts 70S ribosomes to an inactive dimeric form (100S ribosomes). May form immature 90S particles, which are converted to mature 100S ribosomes by the hibernation promoting factor Hpf. The sequence is that of Ribosome modulation factor from Escherichia coli O157:H7.